The following is a 336-amino-acid chain: Cell division protein ZipA (336 aa).

Residues 1–2 are Periplasmic-facing; it reads ME. The helical transmembrane segment at 3–23 threads the bilayer; the sequence is LHILFFILAGLLIAVLISFSL. The Cytoplasmic segment spans residues 24 to 336; that stretch reads WSARREKSRI…SRQSYLARVS (313 aa). The segment at 56–77 is disordered; sequence PSLNPQSYAQTTGQHGETEADN. Positions 59–70 are enriched in polar residues; sequence NPQSYAQTTGQH.

Belongs to the ZipA family. Interacts with FtsZ via their C-terminal domains.

It localises to the cell inner membrane. Essential cell division protein that stabilizes the FtsZ protofilaments by cross-linking them and that serves as a cytoplasmic membrane anchor for the Z ring. Also required for the recruitment to the septal ring of downstream cell division proteins. This chain is Cell division protein ZipA, found in Actinobacillus pleuropneumoniae serotype 3 (strain JL03).